A 336-amino-acid chain; its full sequence is Transmembrane protease serine 12 (336 aa).

A signal peptide spans 1–18 (MASWALSAALLCLGGAFA). Topologically, residues 19-312 (YSELHSLSLR…HYLSQGNINR (294 aa)) are extracellular. The region spanning 66 to 306 (IIGGSQADTG…FQEWMTHYLS (241 aa)) is the Peptidase S1 domain. An intrachain disulfide couples Cys95 to Cys111. Active-site charge relay system residues include His110 and Asp159. 3 disulfides stabilise this stretch: Cys194–Cys262, Cys225–Cys241, and Cys252–Cys282. Residues Asn207, Asn237, and Asn246 are each glycosylated (N-linked (GlcNAc...) asparagine). Ser256 serves as the catalytic Charge relay system. A helical membrane pass occupies residues 313-333 (LFNMDIVLGQVLTALGSVILL). Over 334–336 (GVT) the chain is Cytoplasmic.

Belongs to the peptidase S1 family. As to expression, exclusively expressed in the testis, from spermatocytes to elongated spermatids (at protein level).

It localises to the cell membrane. Its subcellular location is the cytoplasmic vesicle. The protein resides in the secretory vesicle. It is found in the acrosome. Required for male fertility. Plays a critical role in sperm capacitation and acrosome reactions during fertilization, and also plays a role in the regulation of proteins involved in spermatogenesis. Regulates protein pathways that promote chromosomal synapsis formation, double-strand break repair, formation of the inner mitochondrial membrane cristae and apoptosis in developing sperm. Required for normal sperm motility and binding to the zona pellucida, potentially via a role in ADAM3 protein maturation. This Mus musculus (Mouse) protein is Transmembrane protease serine 12.